The chain runs to 291 residues: Acetyl-coenzyme A carboxylase carboxyl transferase subunit beta (291 aa).

The 263-residue stretch at 29-291 (IMTKCPQCKK…TGGEREWLEN (263 aa)) folds into the CoA carboxyltransferase N-terminal domain. Zn(2+)-binding residues include Cys33, Cys36, Cys52, and Cys55. The C4-type zinc finger occupies 33–55 (CPQCKKIMLTKELDKNLRVCMNC).

It belongs to the AccD/PCCB family. As to quaternary structure, acetyl-CoA carboxylase is a heterohexamer composed of biotin carboxyl carrier protein (AccB), biotin carboxylase (AccC) and two subunits each of ACCase subunit alpha (AccA) and ACCase subunit beta (AccD). Zn(2+) serves as cofactor.

The protein localises to the cytoplasm. It carries out the reaction N(6)-carboxybiotinyl-L-lysyl-[protein] + acetyl-CoA = N(6)-biotinyl-L-lysyl-[protein] + malonyl-CoA. Its pathway is lipid metabolism; malonyl-CoA biosynthesis; malonyl-CoA from acetyl-CoA: step 1/1. Functionally, component of the acetyl coenzyme A carboxylase (ACC) complex. Biotin carboxylase (BC) catalyzes the carboxylation of biotin on its carrier protein (BCCP) and then the CO(2) group is transferred by the transcarboxylase to acetyl-CoA to form malonyl-CoA. The sequence is that of Acetyl-coenzyme A carboxylase carboxyl transferase subunit beta from Bacillus pumilus (strain SAFR-032).